A 234-amino-acid chain; its full sequence is DNA repair and recombination protein RadB (234 aa).

The protein belongs to the eukaryotic RecA-like protein family. RadB subfamily.

Functionally, involved in DNA repair and in homologous recombination. May regulate the cleavage reactions of the branch-structured DNA. Has a very weak ATPase activity that is not stimulated by DNA. Binds DNA but does not promote DNA strands exchange. This chain is DNA repair and recombination protein RadB, found in Methanobrevibacter smithii (strain ATCC 35061 / DSM 861 / OCM 144 / PS).